The sequence spans 101 residues: Small ribosomal subunit protein uS14 (101 aa).

It belongs to the universal ribosomal protein uS14 family. Part of the 30S ribosomal subunit. Contacts proteins S3 and S10.

In terms of biological role, binds 16S rRNA, required for the assembly of 30S particles and may also be responsible for determining the conformation of the 16S rRNA at the A site. The polypeptide is Small ribosomal subunit protein uS14 (Paracoccus denitrificans (strain Pd 1222)).